A 422-amino-acid polypeptide reads, in one-letter code: Kynurenine--oxoglutarate transaminase 1 (422 aa).

Residues glycine 36 and asparagine 185 each contribute to the substrate site. Lysine 247 is modified (N6-(pyridoxal phosphate)lysine). Residue arginine 398 participates in substrate binding.

The protein belongs to the class-I pyridoxal-phosphate-dependent aminotransferase family. As to quaternary structure, homodimer. Requires pyridoxal 5'-phosphate as cofactor.

Its subcellular location is the cytoplasm. It localises to the cytosol. It catalyses the reaction L-kynurenine + 2-oxoglutarate = kynurenate + L-glutamate + H2O. It carries out the reaction 3-phenylpyruvate + L-glutamine = 2-oxoglutaramate + L-phenylalanine. The enzyme catalyses an S-substituted L-cysteine + H2O = a thiol + pyruvate + NH4(+). It participates in amino-acid degradation; L-kynurenine degradation; kynurenate from L-kynurenine: step 1/2. Inhibited by tryptophan, indole-3-pyruvic acid, 3-indolepropionic acid, DL-indole-3-lactic acid, indole-3-acetic acid (IAC), amino-oxyacetate (AOAA), aminooxy-phenylpropionic acid (AOPP) and Tris. Its function is as follows. Catalyzes the irreversible transamination of the L-tryptophan metabolite L-kynurenine to form kynurenic acid (KA), an intermediate in the tryptophan catabolic pathway which is also a broad spectrum antagonist of the three ionotropic excitatory amino acid receptors among others. Also metabolizes the cysteine conjugates of certain halogenated alkenes and alkanes to form reactive metabolites. Catalyzes the beta-elimination of S-conjugates and Se-conjugates of L-(seleno)cysteine, resulting in the cleavage of the C-S or C-Se bond. This is Kynurenine--oxoglutarate transaminase 1 from Homo sapiens (Human).